The sequence spans 225 residues: Large ribosomal subunit protein mL58 (225 aa).

The tract at residues 106 to 138 (PQAPITTPESSSTDAAAADQHGDLPPVLYNPTK) is disordered. Positions 109–119 (PITTPESSSTD) are enriched in polar residues.

Belongs to the mitochondrion-specific ribosomal protein mL58 family. Component of the mitochondrial large ribosomal subunit (mt-LSU). Mature N.crassa 74S mitochondrial ribosomes consist of a small (37S) and a large (54S) subunit. The 37S small subunit contains a 16S ribosomal RNA (16S mt-rRNA) and 32 different proteins. The 54S large subunit contains a 23S rRNA (23S mt-rRNA) and 42 different proteins.

The protein resides in the mitochondrion. Functionally, component of the mitochondrial ribosome (mitoribosome), a dedicated translation machinery responsible for the synthesis of mitochondrial genome-encoded proteins, including at least some of the essential transmembrane subunits of the mitochondrial respiratory chain. The mitoribosomes are attached to the mitochondrial inner membrane and translation products are cotranslationally integrated into the membrane. In Neurospora crassa (strain ATCC 24698 / 74-OR23-1A / CBS 708.71 / DSM 1257 / FGSC 987), this protein is Large ribosomal subunit protein mL58 (mrpl20).